The primary structure comprises 88 residues: Phosphocarrier protein HPr (88 aa).

Residues 1–88 (MKKIQVVVKD…KAVLEKHQVI (88 aa)) form the HPr domain. The Pros-phosphohistidine intermediate role is filled by histidine 15. The residue at position 47 (serine 47) is a Phosphoserine; by HPrK/P.

Belongs to the HPr family.

The protein localises to the cytoplasm. Phosphorylation on Ser-47 inhibits the phosphoryl transfer from enzyme I to HPr. General (non sugar-specific) component of the phosphoenolpyruvate-dependent sugar phosphotransferase system (sugar PTS). This major carbohydrate active-transport system catalyzes the phosphorylation of incoming sugar substrates concomitantly with their translocation across the cell membrane. The phosphoryl group from phosphoenolpyruvate (PEP) is transferred to the phosphoryl carrier protein HPr by enzyme I. Phospho-HPr then transfers it to the PTS EIIA domain. Its function is as follows. P-Ser-HPr interacts with the catabolite control protein A (CcpA), forming a complex that binds to DNA at the catabolite response elements cre, operator sites preceding a large number of catabolite-regulated genes. Thus, P-Ser-HPr is a corepressor in carbon catabolite repression (CCR), a mechanism that allows bacteria to coordinate and optimize the utilization of available carbon sources. P-Ser-HPr also plays a role in inducer exclusion, in which it probably interacts with several non-PTS permeases and inhibits their transport activity. This is Phosphocarrier protein HPr (ptsH) from Mycoplasma pneumoniae (strain ATCC 29342 / M129 / Subtype 1) (Mycoplasmoides pneumoniae).